A 136-amino-acid polypeptide reads, in one-letter code: Non-structural protein 1 (136 aa).

The protein belongs to the pneumovirus non-structural protein 1 family. In terms of assembly, monomer. Homomultimer. Heteromultimer with NS2. Interacts with the matrix protein M. Interacts with host ELOC and CUL2; this interaction allows NS1 to form an active E3 ligase with ELOC and CUL2. Interacts with host IRF3; this interaction leads to the disrupted association of IRF3 with CREBBP and thus reduced binding of IRF3 to the IFN-beta promoter. Interacts with host MAVS; this interaction prevents MAVS binding to RIGI and inhibits signaling pathway leading to interferon production. Interacts with host TRIM25 (via SPRY domain); this interaction suppresses RIGI ubiquitination and results in decreased interaction between RIGI and MAVS.

It localises to the host cytoplasm. Its subcellular location is the host mitochondrion. It is found in the host nucleus. Its function is as follows. Plays a major role in antagonizing the type I IFN-mediated antiviral response by degrading or inhibiting multiple cellular factors required for either IFN induction or response pathways. Acts cooperatively with NS2 to repress activation and nuclear translocation of host IFN-regulatory factor IRF3. Also disrupts the association of IRF3 with CREBBP. Interacts with host mitochondrial-associated membrane (MAM) MAVS and prevents the interaction with RIGI. Interacts with TRIM25 to suppress TRIM25-mediated RIGI ubiquitination and thereby RIGI-MAVS interaction. Together with NS2, participates in the proteasomal degradation of host STAT2, IRF3, IRF7, TBK1 and RIGI through a NS-degradasome involving CUL2 and Elongin-C. The degradasome requires an intact mitochondrial MAVS. Decreases the levels of host TRAF3 and IKBKE/IKK-epsilon. As functions other than disruptions of the type I IFN-mediated antiviral signaling pathways, induces host SOCS1 and SOCS3 expression. Suppresses premature apoptosis by an NF-kappa-B-dependent, interferon-independent mechanism and thus facilitates virus growth. Additionally, NS1 may serve some inhibitory role in viral transcription and RNA replication. Suppresses proliferation and activation of host CD103+ CD8+ cytotoxic T-lymphocytes and Th17 helper T-lymphocytes. The sequence is that of Non-structural protein 1 (1C) from Bos taurus (Bovine).